A 676-amino-acid chain; its full sequence is ATP-dependent zinc metalloprotease FTSH 2, chloroplastic (676 aa).

A chloroplast-targeting transit peptide spans 1 to 32; it reads MAPTSMSLAAKTPLPFSTLPSSGVAQRPVSVT. The helical transmembrane segment at 155–175 threads the bilayer; it reads LLFNLIGNLAFPLILIGGLFL. 254–261 provides a ligand contact to ATP; the sequence is GPPGTGKT. Histidine 475 is a binding site for Zn(2+). Residue glutamate 476 is part of the active site. Zn(2+)-binding residues include histidine 479 and aspartate 553.

In the N-terminal section; belongs to the AAA ATPase family. It in the C-terminal section; belongs to the peptidase M41 family. It depends on Zn(2+) as a cofactor.

The protein resides in the plastid. It localises to the chloroplast thylakoid membrane. Probable ATP-dependent zinc metallopeptidase. The sequence is that of ATP-dependent zinc metalloprotease FTSH 2, chloroplastic (FTSH2) from Oryza sativa subsp. japonica (Rice).